A 460-amino-acid polypeptide reads, in one-letter code: Lipase member H (460 aa).

The signal sequence occupies residues 1 to 24; sequence MLLRFYFNGLLFVGCLLSWGRSDT. Residues Asn67 and Asn75 are each glycosylated (N-linked (GlcNAc...) asparagine). The active-site Nucleophile is Ser163. An N-linked (GlcNAc...) asparagine glycan is attached at Asn177. Asp187 (charge relay system) is an active-site residue. Cys242 and Cys255 are oxidised to a cystine. The Charge relay system role is filled by His257. Intrachain disulfides connect Cys279–Cys290 and Cys293–Cys301. A glycan (N-linked (GlcNAc...) asparagine) is linked at Asn289. Residue Asn366 is glycosylated (N-linked (GlcNAc...) asparagine). A disulfide bond links Cys436 and Cys455.

Belongs to the AB hydrolase superfamily. Lipase family.

It localises to the secreted. It is found in the cell membrane. The enzyme catalyses 1-hexadecanoyl-2-(9Z-octadecenoyl)-sn-glycero-3-phosphate + H2O = 2-(9Z-octadecenoyl)-sn-glycero-3-phosphate + hexadecanoate + H(+). In terms of biological role, hydrolyzes specifically phosphatidic acid (PA) to produce 2-acyl lysophosphatidic acid (LPA; a potent bioactive lipid mediator) and fatty acid. Does not hydrolyze other phospholipids, like phosphatidylserine (PS), phosphatidylcholine (PC) and phosphatidylethanolamine (PE) or triacylglycerol (TG). The sequence is that of Lipase member H (liph) from Xenopus tropicalis (Western clawed frog).